Consider the following 361-residue polypeptide: MSNSNSAKVRVAVLYGGRSAEHSVSCVSAGAIIAHLDPEKYEVIPVGITTDGAWVVGESDPERLRLVDRTMPEVQRREEIRPSLDPAHRGEFHFADGSLYATADVIFPVLHGRFGEDGTIQGMFALSDIPVVGPGVLSSAAGMDKEFTKKLMAAEGLPIGREVILRDRAELTDAEKKLLGLPVFVKPARGGSSIGISKVSRWEDLPAAVDLARQHDEKVIVESEIVGPEVECGVLQYPDGRIVASLPAMLRGTEDGEGGFYDFDTKYLDNVVTAEIPAPLDEEIIELVQSLAVETFQALACEGLARVDFFVTANGPVLNEINTMPGFTPISMYPQMFAASGVGYEELLDVLVQQALHRSSN.

The region spanning 149–353 (KKLMAAEGLP…YEELLDVLVQ (205 aa)) is the ATP-grasp domain. 176–231 (KKLLGLPVFVKPARGGSSIGISKVSRWEDLPAAVDLARQHDEKVIVESEIVGPEVE) contributes to the ATP binding site. Positions 308, 320, and 322 each coordinate Mg(2+).

Belongs to the D-alanine--D-alanine ligase family. Mg(2+) is required as a cofactor. It depends on Mn(2+) as a cofactor.

Its subcellular location is the cytoplasm. It carries out the reaction 2 D-alanine + ATP = D-alanyl-D-alanine + ADP + phosphate + H(+). It functions in the pathway cell wall biogenesis; peptidoglycan biosynthesis. Functionally, cell wall formation. This Corynebacterium efficiens (strain DSM 44549 / YS-314 / AJ 12310 / JCM 11189 / NBRC 100395) protein is D-alanine--D-alanine ligase.